Reading from the N-terminus, the 496-residue chain is Probable ATP-dependent DNA helicase RecS (496 aa).

One can recognise a Helicase ATP-binding domain in the interval 25 to 192 (IESILSGKDT…MNLLELQHAV (168 aa)). An ATP-binding site is contributed by 38 to 45 (LPTGGGKS). The short motif at 136–139 (DEAH) is the DEAH box element. Residues 219-363 (RVIQLVENLQ…EIADVIRVLE (145 aa)) enclose the Helicase C-terminal domain.

This sequence belongs to the helicase family. RecQ subfamily. In terms of assembly, interacts with SSB (ssbA) and YpbB.

Its subcellular location is the cytoplasm. It is found in the nucleoid. It catalyses the reaction Couples ATP hydrolysis with the unwinding of duplex DNA by translocating in the 3'-5' direction.. The catalysed reaction is ATP + H2O = ADP + phosphate + H(+). Probable 3'-5' DNA helicase. Required in synaptic and/or post-synaptic stages of recombination. Probably has an overlapping function with RecQ. It probably acts to help generate ss-DNA from ds-DNA breaks. This chain is Probable ATP-dependent DNA helicase RecS, found in Bacillus subtilis (strain 168).